A 604-amino-acid polypeptide reads, in one-letter code: Sulfite reductase [NADPH] flavoprotein alpha-component (604 aa).

The 139-residue stretch at 65-203 (VTILYGSQTG…AAGQWHADVL (139 aa)) folds into the Flavodoxin-like domain. Residues 71–76 (SQTGNG), 118–121 (STHG), and 154–163 (LGDSSYEFFC) each bind FMN. The region spanning 236-453 (QNPYSAEVLV…VEPNKHFRLP (218 aa)) is the FAD-binding FR-type domain. FAD is bound by residues T324, L358, 392-395 (RLYS), 410-412 (TVA), and 425-428 (GGAS). NADP(+) contacts are provided by residues 524 to 525 (SR), 530 to 534 (KIYVQ), and D566. Y604 contributes to the FAD binding site.

It belongs to the NADPH-dependent sulphite reductase flavoprotein subunit CysJ family. This sequence in the N-terminal section; belongs to the flavodoxin family. In the C-terminal section; belongs to the flavoprotein pyridine nucleotide cytochrome reductase family. As to quaternary structure, alpha(8)-beta(8). The alpha component is a flavoprotein, the beta component is a hemoprotein. Requires FAD as cofactor. It depends on FMN as a cofactor.

It catalyses the reaction hydrogen sulfide + 3 NADP(+) + 3 H2O = sulfite + 3 NADPH + 4 H(+). Its pathway is sulfur metabolism; hydrogen sulfide biosynthesis; hydrogen sulfide from sulfite (NADPH route): step 1/1. Functionally, component of the sulfite reductase complex that catalyzes the 6-electron reduction of sulfite to sulfide. This is one of several activities required for the biosynthesis of L-cysteine from sulfate. The flavoprotein component catalyzes the electron flow from NADPH -&gt; FAD -&gt; FMN to the hemoprotein component. This is Sulfite reductase [NADPH] flavoprotein alpha-component from Shewanella sp. (strain ANA-3).